We begin with the raw amino-acid sequence, 142 residues long: Large ribosomal subunit protein uL24 (142 aa).

Over residues 1 to 11 (MKVNPFVSSDS) the composition is skewed to polar residues. The interval 1-24 (MKVNPFVSSDSGKSRKAHFNAPSH) is disordered.

Belongs to the universal ribosomal protein uL24 family.

This Caenorhabditis elegans protein is Large ribosomal subunit protein uL24 (rpl-26).